Here is a 453-residue protein sequence, read N- to C-terminus: Ribosome biogenesis protein SSF2 (453 aa).

Over residues 1–11 (MAKRRQKKRTH) the composition is skewed to basic residues. 3 disordered regions span residues 1-22 (MAKRRQKKRTHAQITPEQERDI), 275-327 (KAKH…KAIK), and 373-453 (AKMR…SEVE). The region spanning 26 to 348 (MVIRVGQTSL…LVKIEDGICS (323 aa)) is the Brix domain. The span at 373 to 398 (AKMRLKEQRRKEQEENIAKKKAVKDA) shows a compositional bias: basic and acidic residues. Basic residues predominate over residues 399–409 (KKQRKLERRKA). The span at 440–453 (VPEDLDSDLFSEVE) shows a compositional bias: acidic residues.

In terms of assembly, part of a complex that includes BRX1, RPF1, RPF2 and SSF1 or SSF2.

The protein localises to the nucleus. It is found in the nucleolus. In terms of biological role, required for biogenesis of the 60S ribosomal subunit. This Saccharomyces cerevisiae (strain ATCC 204508 / S288c) (Baker's yeast) protein is Ribosome biogenesis protein SSF2 (SSF2).